Here is a 438-residue protein sequence, read N- to C-terminus: UPF0229 protein Smed_1028 (438 aa).

Residues 55-107 form a disordered region; sequence PARGVNEPAFQPDSNSGERRHVLPGNREFAAGDRIPKRGGGGGAGNAGAGTGQ. Residues 92–105 show a composition bias toward gly residues; sequence RGGGGGAGNAGAGT.

The protein belongs to the UPF0229 family.

The chain is UPF0229 protein Smed_1028 from Sinorhizobium medicae (strain WSM419) (Ensifer medicae).